The primary structure comprises 570 residues: MDLTTTRQRRPLISDSSSSSSTKSYSKTDKPGRSNGGDAEDGGLRWFLPFIALCYLRYMSATSNIIHDCDEVFNYWEPLHYILYKSGFQTWEYSSNFALRSYLYILFHELAGRPASWWFGDDKVRVFYAVRLFLGLVSAVSDTVLVVALSRKYGKRIATYAVAMLCLTSGCFFASTSFLPSSFSMYAISLSSGLLLFEKYAMAVAVSVVGVILGWPFSILAFLPVVIYSLVKRFKQAFIAGAVTTIFLLGVSLLVDYYYYKRWTSSVLNLLIYNVLGGGESHLYGTEGALFYIRNGFNNFNFCFILAMLFVAIYPVIRRKYDRALLVVISPMYIWLAFMSLQPHKEERFLYPIYPLICVSASAVIENIPELFREKYSSRESLLVTITKYMRPVILGCILCASHSRTFALINGYSAPLEVYKLLEHHDDAGPGSVLCVGSEWHRYPSSFFVPHYISEVRWIDDGFRGLLPFPFNNTLGGTSASPPYFNNKNQASEEQYLKNIETCTFLIELQLSRPYQYRGSDLSTWEAIAVLPYLDRELSPAKYRSFFIPHMWQEKNVFGKYVALRRVPK.

Residues 1-37 (MDLTTTRQRRPLISDSSSSSSTKSYSKTDKPGRSNGG) form a disordered region. Over residues 14-25 (SDSSSSSSTKSY) the composition is skewed to low complexity. A run of 8 helical transmembrane segments spans residues 129-149 (AVRL…VVAL), 160-180 (YAVA…SFLP), 208-228 (VVGV…VVIY), 237-257 (AFIA…LVDY), 297-317 (FNNF…YPVI), 324-344 (ALLV…LQPH), 349-369 (FLYP…ENIP), and 381-401 (SLLV…ILCA). N473 carries an N-linked (GlcNAc...) asparagine glycan.

Belongs to the glycosyltransferase 22 family.

The protein localises to the endoplasmic reticulum membrane. It carries out the reaction an alpha-D-Man-(1-&gt;2)-alpha-D-Man-(1-&gt;2)-alpha-D-Man-(1-&gt;3)-[alpha-D-Man-(1-&gt;3)-alpha-D-Man-(1-&gt;6)]-beta-D-Man-(1-&gt;4)-beta-D-GlcNAc-(1-&gt;4)-alpha-D-GlcNAc-diphospho-di-trans,poly-cis-dolichol + a di-trans,poly-cis-dolichyl beta-D-mannosyl phosphate = an alpha-D-Man-(1-&gt;2)-alpha-D-Man-(1-&gt;2)-alpha-D-Man-(1-&gt;3)-[alpha-D-Man-(1-&gt;2)-alpha-D-Man-(1-&gt;3)-alpha-D-Man-(1-&gt;6)]-beta-D-Man-(1-&gt;4)-beta-D-GlcNAc-(1-&gt;4)-alpha-D-GlcNAc-diphospho-di-trans,poly-cis-dolichol + a di-trans,poly-cis-dolichyl phosphate + H(+). The catalysed reaction is an alpha-D-Man-(1-&gt;2)-alpha-D-Man-(1-&gt;2)-alpha-D-Man-(1-&gt;3)-[alpha-D-Man-(1-&gt;2)-alpha-D-Man-(1-&gt;3)-[alpha-D-Man-(1-&gt;6)]-alpha-D-Man-(1-&gt;6)]-beta-D-Man-(1-&gt;4)-beta-D-GlcNAc-(1-&gt;4)-alpha-D-GlcNAc-diphospho-di-trans,poly-cis-dolichol + a di-trans,poly-cis-dolichyl beta-D-mannosyl phosphate = an alpha-D-Man-(1-&gt;2)-alpha-D-Man-(1-&gt;2)-alpha-D-Man-(1-&gt;3)-[alpha-D-Man-(1-&gt;2)-alpha-D-Man-(1-&gt;3)-[alpha-D-Man-(1-&gt;2)-alpha-D-Man-(1-&gt;6)]-alpha-D-Man-(1-&gt;6)]-beta-D-Man-(1-&gt;4)-beta-D-GlcNAc-(1-&gt;4)-alpha-D-GlcNAc-diphospho-di-trans,poly-cis-dolichol + a di-trans,poly-cis-dolichyl phosphate + H(+). It functions in the pathway protein modification; protein glycosylation. In terms of biological role, mannosyltransferase that operates in the biosynthetic pathway of dolichol-linked oligosaccharides, the glycan precursors employed in protein asparagine (N)-glycosylation. The assembly of dolichol-linked oligosaccharides begins on the cytosolic side of the endoplasmic reticulum membrane and finishes in its lumen. The sequential addition of sugars to dolichol pyrophosphate produces dolichol-linked oligosaccharides containing fourteen sugars, including two GlcNAcs, nine mannoses and three glucoses. Once assembled, the oligosaccharide is transferred from the lipid to nascent proteins by oligosaccharyltransferases. In the lumen of the endoplasmic reticulum, catalyzes the addition of the seventh and ninth alpha-1,2-linked mannose residues to Man(6)GlcNAc(2)-PP-dolichol and Man(8)GlcNAc(2)-PP-dolichol respectively. This Arabidopsis thaliana (Mouse-ear cress) protein is Alpha-1,2-mannosyltransferase ALG9 (ALG9).